The chain runs to 199 residues: UPF0637 protein LACR_1918 (199 aa).

The protein belongs to the UPF0637 family.

This chain is UPF0637 protein LACR_1918, found in Lactococcus lactis subsp. cremoris (strain SK11).